Here is a 75-residue protein sequence, read N- to C-terminus: Translation initiation factor IF-1 1 (75 aa).

Residues 1–74 (MARSDMIEVD…TRGRIVYRYR (74 aa)) form the S1-like domain.

It belongs to the IF-1 family. In terms of assembly, component of the 30S ribosomal translation pre-initiation complex which assembles on the 30S ribosome in the order IF-2 and IF-3, IF-1 and N-formylmethionyl-tRNA(fMet); mRNA recruitment can occur at any time during PIC assembly.

The protein localises to the cytoplasm. Its function is as follows. One of the essential components for the initiation of protein synthesis. Stabilizes the binding of IF-2 and IF-3 on the 30S subunit to which N-formylmethionyl-tRNA(fMet) subsequently binds. Helps modulate mRNA selection, yielding the 30S pre-initiation complex (PIC). Upon addition of the 50S ribosomal subunit IF-1, IF-2 and IF-3 are released leaving the mature 70S translation initiation complex. In Symbiobacterium thermophilum (strain DSM 24528 / JCM 14929 / IAM 14863 / T), this protein is Translation initiation factor IF-1 1.